Here is a 160-residue protein sequence, read N- to C-terminus: Phosphopantetheine adenylyltransferase (160 aa).

Threonine 10 contacts substrate. ATP is bound by residues 10–11 and histidine 18; that span reads TF. Residues lysine 42, leucine 74, and arginine 88 each contribute to the substrate site. Residues 89–91, glutamate 99, and 124–130 contribute to the ATP site; these read GLR and NSFISST.

The protein belongs to the bacterial CoaD family. As to quaternary structure, homohexamer. The cofactor is Mg(2+).

It localises to the cytoplasm. The enzyme catalyses (R)-4'-phosphopantetheine + ATP + H(+) = 3'-dephospho-CoA + diphosphate. It functions in the pathway cofactor biosynthesis; coenzyme A biosynthesis; CoA from (R)-pantothenate: step 4/5. Reversibly transfers an adenylyl group from ATP to 4'-phosphopantetheine, yielding dephospho-CoA (dPCoA) and pyrophosphate. This chain is Phosphopantetheine adenylyltransferase, found in Photobacterium damsela subsp. piscicida (Pasteurella piscicida).